A 23-amino-acid chain; its full sequence is Potassium channel toxin kappa-KTx 1.3 (23 aa).

2 disulfides stabilise this stretch: Cys-4-Cys-22 and Cys-8-Cys-18.

This sequence belongs to the short scorpion toxin superfamily. Potassium channel inhibitor kappa-KTx family. Kappa-KTx 1 subfamily. Monomer. In terms of processing, is not amidated. In terms of tissue distribution, expressed by the venom gland.

The protein localises to the secreted. Its function is as follows. Shows very weak blocking activity on voltage-gated potassium channels Kv10.1/KCNH1/EAG1 (6.2% inhibition by 40 uM of the toxin). Has no effect on the other voltage-gated potassium channels tested. This is Potassium channel toxin kappa-KTx 1.3 from Heterometrus spinifer (Asia giant forest scorpion).